The sequence spans 73 residues: Putative antitoxin M1627_0365 (73 aa).

The protein belongs to the UPF0330 family.

Possibly the antitoxin component of a type II toxin-antitoxin (TA) system. The polypeptide is Putative antitoxin M1627_0365 (Saccharolobus islandicus (strain M.16.27) (Sulfolobus islandicus)).